The chain runs to 298 residues: Inosose dehydratase (298 aa).

This sequence belongs to the IolE/MocC family. Glutathione serves as cofactor. Requires Co(2+) as cofactor. It depends on Mn(2+) as a cofactor.

It catalyses the reaction scyllo-inosose = 3D-3,5/4-trihydroxycyclohexane-1,2-dione + H2O. Its pathway is polyol metabolism; myo-inositol degradation into acetyl-CoA; acetyl-CoA from myo-inositol: step 2/7. Catalyzes the dehydration of inosose (2-keto-myo-inositol, 2KMI or 2,4,6/3,5-pentahydroxycyclohexanone) to 3D-(3,5/4)-trihydroxycyclohexane-1,2-dione (D-2,3-diketo-4-deoxy-epi-inositol). This chain is Inosose dehydratase, found in Clostridium beijerinckii (strain ATCC 51743 / NCIMB 8052) (Clostridium acetobutylicum).